We begin with the raw amino-acid sequence, 246 residues long: MGSKYKRILIKLSGEALAGEGEFGIDTNKAHSLAEEIKEVHDLGVEIALVVGGGNIIRGTNLAKVGIDRATADYMGMLATIQNALALQDACEKKGLYTRVQSAIEINSIAESYIRRRAVRHLEKRRIVIFAGGTGNPYFTTDTTASLRAVEVGCDVILKATKVDGVYTADPKKDNGAKRYSQISFMESINRRLKVMDSTALSLCMENNMPIIVFDIFKQGNLKDLVTGKNIGTLISNSEDIQIDGK.

11–14 provides a ligand contact to ATP; it reads KLSG. A UMP-binding site is contributed by G53. The ATP site is built by G54 and R58. UMP-binding positions include D73 and 134 to 141; that span reads TGNPYFTT. ATP-binding residues include T161, Y167, and D170.

It belongs to the UMP kinase family. Homohexamer.

It is found in the cytoplasm. It carries out the reaction UMP + ATP = UDP + ADP. It functions in the pathway pyrimidine metabolism; CTP biosynthesis via de novo pathway; UDP from UMP (UMPK route): step 1/1. Inhibited by UTP. In terms of biological role, catalyzes the reversible phosphorylation of UMP to UDP. This chain is Uridylate kinase, found in Leptospira borgpetersenii serovar Hardjo-bovis (strain JB197).